The following is a 308-amino-acid chain: tRNA pseudouridine synthase B (308 aa).

Aspartate 47 (nucleophile) is an active-site residue.

This sequence belongs to the pseudouridine synthase TruB family. Type 1 subfamily.

The catalysed reaction is uridine(55) in tRNA = pseudouridine(55) in tRNA. Functionally, responsible for synthesis of pseudouridine from uracil-55 in the psi GC loop of transfer RNAs. The protein is tRNA pseudouridine synthase B of Xanthomonas campestris pv. campestris (strain B100).